A 582-amino-acid chain; its full sequence is Putative G-protein coupled receptor B0244.10 (582 aa).

4 helical membrane-spanning segments follow: residues Leu-25–Leu-45, Ile-70–Val-90, Trp-120–Ile-140, and Leu-159–Thr-179. N-linked (GlcNAc...) asparagine glycosylation is present at Asn-190. Residues Leu-199–Ile-218 traverse the membrane as a helical segment. N-linked (GlcNAc...) asparagine glycosylation is found at Asn-221 and Asn-237. The next 5 membrane-spanning stretches (helical) occupy residues Ser-253–Val-273, Tyr-296–Ile-316, Thr-329–Gly-349, Ile-377–Leu-397, and Trp-421–Val-441. An N-linked (GlcNAc...) asparagine glycan is attached at Asn-457. Helical transmembrane passes span Thr-475 to Gly-495 and Leu-513 to Leu-533. Residue Asn-538 is glycosylated (N-linked (GlcNAc...) asparagine).

Belongs to the G-protein coupled receptor 1 family. B0244 subfamily.

The protein localises to the cell membrane. The polypeptide is Putative G-protein coupled receptor B0244.10 (Caenorhabditis elegans).